The primary structure comprises 678 residues: MANPVAGIAGSAAKSVRPFRSSEAYVEAMKEDLADWLNALYSLGLPGSGDGFLTGLATGTTLCQHANAVTEAARALAAARPTRGVAFQAHSVAPGSFMARDNVASFIGWCRAELGVPEVLMFETEDLVLRKNEKSVVLCLLEVARRGARLGLLAPRLVQFEQEIERELRATPQVSSVPAAEEDVTEIATVPGVPTRTPRMTPNDLRNLDELVREILGRCTCPDQFPMIKVSEGKYRVGDSSLLIFVRVLRSHVMVRVGGGWDTLEHYLDKHDPCRCSSSTHRLPQQRTGTFSPQRGSPTPSPRPGSPVPGSERRSSRPEVTPISLRGTKEGPETPLRPRDQLPPLPRSRRYSGDSDSSASSAQSGPMGARSDDSATGSRRERPSHRPTSCLPASPRRPTAPRSQSRDRLDRGRPRVAPGGRGAQLSTSSPARRTRSQSREEQAVLMVRRDRDGQHSWVARGRGGGGSGGSGRSTPQTPRALSPAAPRPSRGPSPGPELAATPASIFRTPLQLDPQQEQQLFRRLEEEFLANARALEAAASHTPMGSAPDPPAPDSAYCSSSSSSSSLSVLGGKCGQPGESGRTANGLPGPRSQALSSSSDEGSPYLAVGGALDATRSSLAGPEPSLTWARGRMDTQPDRKPSRIPTPRGPRRPSGPIELGAWHAQHSVTPRTEPDSSM.

A2 is modified (N-acetylalanine). Positions E27–A148 constitute a Calponin-homology (CH) domain. One can recognise a GAR domain in the interval N203 to R275. Over residues C276–F291 the composition is skewed to polar residues. Disordered stretches follow at residues C276–L524 and A538–M678. Phosphoserine occurs at positions 306 and 316. A compositionally biased stretch (basic and acidic residues) spans G327 to D340. The residue at position 334 (T334) is a Phosphothreonine. Phosphoserine is present on residues S352 and S355. Over residues D354 to G365 the composition is skewed to low complexity. Positions R370–E381 are enriched in basic and acidic residues. Over residues P392 to S403 the composition is skewed to low complexity. The residue at position 394 (S394) is a Phosphoserine. A compositionally biased stretch (basic and acidic residues) spans Q404–R413. 2 positions are modified to phosphoserine: S436 and S438. Residues Q437–Q454 are compositionally biased toward basic and acidic residues. The segment covering G461 to G471 has biased composition (gly residues). A phosphoserine mark is found at S482 and S489. Over residues A485–G495 the composition is skewed to pro residues. The residue at position 490 (R490) is an Omega-N-methylarginine. Position 493 is a phosphoserine (S493). T501 is modified (phosphothreonine). Position 507 is an omega-N-methylarginine (R507). Composition is skewed to low complexity over residues P509–Q519 and D554–S568. R630 is subject to Omega-N-methylarginine. Over residues G631–P641 the composition is skewed to basic and acidic residues. Residue S654 is modified to Phosphoserine. The span at H666–M678 shows a compositional bias: polar residues.

This sequence belongs to the GAS2 family. Interacts with MAPRE1.

It localises to the cytoplasm. The protein resides in the cytoskeleton. Its subcellular location is the stress fiber. Seems to be involved in the cross-linking of microtubules and microfilaments. Regulates microtubule dynamics and stability by interacting with microtubule plus-end tracking proteins, such as MAPRE1, to regulate microtubule growth along actin stress fibers. This is GAS2-like protein 1 (Gas2l1) from Mus musculus (Mouse).